Consider the following 1014-residue polypeptide: Klotho (1014 aa).

The signal sequence occupies residues 1 to 35 (MPASAPPRRPRPPPPSLSLSLLLVLLGLAGRRLRA). At 36-983 (EPGDGAQTWA…ECSFFHTRKP (948 aa)) the chain is on the extracellular side. Glycosyl hydrolase-1 stretches follow at residues 59-508 (FQGT…KNGF) and 517-955 (LEGT…SNGF). N-linked (GlcNAc...) asparagine glycosylation is found at Asn-161, Asn-285, Asn-346, Asn-609, Asn-614, and Asn-696. Residues 984 to 1004 (LVAFIAFLFFAFIVSLSLIFY) form a helical membrane-spanning segment. The Cytoplasmic segment spans residues 1005 to 1014 (YSKKGRRRYQ).

Belongs to the glycosyl hydrolase 1 family. Klotho subfamily. In terms of assembly, homodimer. Interacts with FGF23 and FGFR1.

Its subcellular location is the cell membrane. It is found in the apical cell membrane. It localises to the secreted. It catalyses the reaction a beta-D-glucuronoside + H2O = D-glucuronate + an alcohol. Its function is as follows. May have weak glycosidase activity towards glucuronylated steroids. However, it lacks essential active site Glu residues at positions 241 and 874, suggesting it may be inactive as a glycosidase in vivo. May be involved in the regulation of calcium and phosphorus homeostasis by inhibiting the synthesis of active vitamin D. Essential factor for the specific interaction between FGF23 and FGFR1. The Klotho peptide generated by cleavage of the membrane-bound isoform may be an anti-aging circulating hormone which would extend life span by inhibiting insulin/IGF1 signaling. The polypeptide is Klotho (KL) (Macaca fascicularis (Crab-eating macaque)).